We begin with the raw amino-acid sequence, 31 residues long: Kappa-sparatoxin-Hv1c (31 aa).

Intrachain disulfides connect cysteine 2–cysteine 16, cysteine 9–cysteine 21, and cysteine 15–cysteine 25. Residue tryptophan 31 is modified to Tryptophan amide.

In terms of tissue distribution, expressed by the venom gland.

Its subcellular location is the secreted. Functionally, blocks transient outward voltage-gated potassium channels in rat ventricular myocytes (thus prolonging action-potential duration) and rat Kv4.2/KCNA4 channels expressed in Xenopus oocytes. Is also a weak blocker of calcium channels in rat cerebellar granule cells. The chain is Kappa-sparatoxin-Hv1c from Heteropoda venatoria (Brown huntsman spider).